Here is a 325-residue protein sequence, read N- to C-terminus: tRNA N6-adenosine threonylcarbamoyltransferase (325 aa).

Fe cation is bound by residues histidine 107 and histidine 111. Substrate-binding positions include 129 to 133 (LVSGG), aspartate 162, glycine 175, and asparagine 265. Aspartate 293 contacts Fe cation.

The protein belongs to the KAE1 / TsaD family. Fe(2+) serves as cofactor.

The protein resides in the cytoplasm. It carries out the reaction L-threonylcarbamoyladenylate + adenosine(37) in tRNA = N(6)-L-threonylcarbamoyladenosine(37) in tRNA + AMP + H(+). Its function is as follows. Required for the formation of a threonylcarbamoyl group on adenosine at position 37 (t(6)A37) in tRNAs that read codons beginning with adenine. Is involved in the transfer of the threonylcarbamoyl moiety of threonylcarbamoyl-AMP (TC-AMP) to the N6 group of A37, together with TsaE and TsaB. TsaD likely plays a direct catalytic role in this reaction. In Sulfurimonas denitrificans (strain ATCC 33889 / DSM 1251) (Thiomicrospira denitrificans (strain ATCC 33889 / DSM 1251)), this protein is tRNA N6-adenosine threonylcarbamoyltransferase.